The primary structure comprises 139 residues: Acidic phospholipase A2 5 (139 aa).

The first 16 residues, 1–16 (MRTLWIVAVWLMGVEG), serve as a signal peptide directing secretion. Disulfide bonds link Cys-42–Cys-131, Cys-44–Cys-60, Cys-59–Cys-111, Cys-65–Cys-139, Cys-66–Cys-104, Cys-73–Cys-97, and Cys-91–Cys-102. Positions 43, 45, and 47 each coordinate Ca(2+). Residue His-63 is part of the active site. Asp-64 serves as a coordination point for Ca(2+). Residue Asp-105 is part of the active site.

The protein belongs to the phospholipase A2 family. Group II subfamily. D49 sub-subfamily. Ca(2+) is required as a cofactor. Expressed by the venom gland.

It is found in the secreted. The enzyme catalyses a 1,2-diacyl-sn-glycero-3-phosphocholine + H2O = a 1-acyl-sn-glycero-3-phosphocholine + a fatty acid + H(+). Functionally, PLA2 catalyzes the calcium-dependent hydrolysis of the 2-acyl groups in 3-sn-phosphoglycerides. This is Acidic phospholipase A2 5 from Echis pyramidum leakeyi (Leakey's carpet viper).